Consider the following 78-residue polypeptide: Large ribosomal subunit protein bL28 (78 aa).

Positions 1–25 are disordered; it reads MARVCQVTGKRPMSGHHVSHANNKT. The span at 13–25 shows a compositional bias: basic residues; the sequence is MSGHHVSHANNKT.

The protein belongs to the bacterial ribosomal protein bL28 family.

In Nitrosomonas eutropha (strain DSM 101675 / C91 / Nm57), this protein is Large ribosomal subunit protein bL28.